A 358-amino-acid polypeptide reads, in one-letter code: 3-ketosteroid-9-alpha-monooxygenase, ferredoxin reductase component (358 aa).

One can recognise an FAD-binding FR-type domain in the interval 12-124 (DHVLELQIAE…LAPSGNFVPT (113 aa)). The 90-residue stretch at 269–358 (ATAVVELDGQ…SDSVEVTYDE (90 aa)) folds into the 2Fe-2S ferredoxin-type domain. [2Fe-2S] cluster contacts are provided by Cys305, Cys310, Cys313, and Cys343.

Monomer. The two-component system 3-ketosteroid-9-alpha-monooxygenase is composed of an oxygenase component KshA and a reductase component KshB. Requires FAD as cofactor. [2Fe-2S] cluster serves as cofactor.

The enzyme catalyses androsta-1,4-diene-3,17-dione + 2 reduced [2Fe-2S]-[ferredoxin] + O2 + 2 H(+) = 9alpha-hydroxyandrosta-1,4-diene-3,17-dione + 2 oxidized [2Fe-2S]-[ferredoxin] + H2O. Its pathway is lipid metabolism; steroid biosynthesis. In terms of biological role, involved in the degradation of cholesterol. Catalyzes the introduction of a 9a-hydroxyl moiety into 1,4-androstadiene-3,17-dione (ADD) to yield the 9alpha-hydroxy-1,4-androstadiene-3,17-dione (9OHADD) intermediate which spontaneously form 3-hydroxy-9,10-seconandrost-1,3,5(10)-triene-9,17-dione (HSA) via the meta-cleavage of ring B with concomitant aromatization of ring A. The polypeptide is 3-ketosteroid-9-alpha-monooxygenase, ferredoxin reductase component (hmp) (Mycobacterium tuberculosis (strain CDC 1551 / Oshkosh)).